A 93-amino-acid chain; its full sequence is MFYLISYDISVDQRRLKIAKLLEGYGQRVLESVFECDLELPAYRQLRQKLNRLIKDEEGDRLRIYRLCASCREQIEIIGDGPPPETSQDIYII.

Asp-8 is a binding site for Mg(2+).

Belongs to the CRISPR-associated endoribonuclease Cas2 protein family. Homodimer, forms a heterotetramer with a Cas1 homodimer. Requires Mg(2+) as cofactor.

In terms of biological role, CRISPR (clustered regularly interspaced short palindromic repeat), is an adaptive immune system that provides protection against mobile genetic elements (viruses, transposable elements and conjugative plasmids). CRISPR clusters contain sequences complementary to antecedent mobile elements and target invading nucleic acids. CRISPR clusters are transcribed and processed into CRISPR RNA (crRNA). Functions as a ssRNA-specific endoribonuclease. Involved in the integration of spacer DNA into the CRISPR cassette. The protein is CRISPR-associated endoribonuclease Cas2 1 of Chloroflexus aurantiacus (strain ATCC 29366 / DSM 635 / J-10-fl).